The following is a 55-amino-acid chain: Histone H1 (55 aa).

Low complexity predominate over residues 1-15; it reads MAEVAPAPAAAAPAK. A disordered region spans residues 1–28; it reads MAEVAPAPAAAAPAKAPKKKAAAKPKKA. Ala-2 carries the post-translational modification N-acetylalanine. A compositionally biased stretch (basic residues) spans 16–27; sequence APKKKAAAKPKK. Residues 28 to 55 form the H15 domain; the sequence is AGPSVGELIVKAVSASKERSGVSLAALK.

This sequence belongs to the histone H1/H5 family.

The protein resides in the nucleus. Its subcellular location is the chromosome. The protein localises to the secreted. Its function is as follows. Histones H1 are necessary for the condensation of nucleosome chains into higher-order structures. Functionally, SAMP H1 has antibacterial activity against Gram-negative bacteria E.coli, A.salmonicida subsp salmonicida, V.anguillarum and S.typhimurium and Gram-positive bacteria B.subtilis and L.ivanovii. The chain is Histone H1 from Salmo salar (Atlantic salmon).